The sequence spans 120 residues: Immunoglobulin lambda variable 4-60 (120 aa).

The N-terminal stretch at 1–21 (MAWTPLLLLFPLLLHCTGSLS) is a signal peptide. The interval 22–46 (QPVLTQSSSASASLGSSVKLTCTLS) is framework-1. The Ig-like domain maps to 23–120 (PVLTQSSSAS…YYCETWDSNT (98 aa)). A disulfide bond links Cys43 and Cys113. The segment at 47–53 (SGHSSYI) is complementarity-determining-1. The framework-2 stretch occupies residues 54–70 (IAWHQQQPGKAPRYLMK). Residues 71–77 (LEGSGSY) are complementarity-determining-2. A framework-3 region spans residues 78–113 (NKGSGVPDRFSGSSSGADRYLTISNLQFEDEADYYC). Residues 114–120 (ETWDSNT) form a complementarity-determining-3 region.

As to quaternary structure, immunoglobulins are composed of two identical heavy chains and two identical light chains; disulfide-linked.

Its subcellular location is the secreted. It is found in the cell membrane. V region of the variable domain of immunoglobulin light chains that participates in the antigen recognition. Immunoglobulins, also known as antibodies, are membrane-bound or secreted glycoproteins produced by B lymphocytes. In the recognition phase of humoral immunity, the membrane-bound immunoglobulins serve as receptors which, upon binding of a specific antigen, trigger the clonal expansion and differentiation of B lymphocytes into immunoglobulins-secreting plasma cells. Secreted immunoglobulins mediate the effector phase of humoral immunity, which results in the elimination of bound antigens. The antigen binding site is formed by the variable domain of one heavy chain, together with that of its associated light chain. Thus, each immunoglobulin has two antigen binding sites with remarkable affinity for a particular antigen. The variable domains are assembled by a process called V-(D)-J rearrangement and can then be subjected to somatic hypermutations which, after exposure to antigen and selection, allow affinity maturation for a particular antigen. In Homo sapiens (Human), this protein is Immunoglobulin lambda variable 4-60.